We begin with the raw amino-acid sequence, 51 residues long: U-Asilidin(1)-Eru1a (51 aa).

Residues methionine 1–alanine 23 form the signal peptide. 3 cysteine pairs are disulfide-bonded: cysteine 26–cysteine 40, cysteine 33–cysteine 44, and cysteine 39–cysteine 49.

This sequence belongs to the asilidin-1 family. Expressed by the venom gland. The most highly expressed peptides U-Asilidin1-Mar1a is around 3000 times higher expressed in the venom thoracic glands compared to its body tissues.

It is found in the secreted. Induces neurotoxic effect on honeybees, including slow movements, disorientation and paralysis. Since it provokes similar symptoms than omega-atracotoxin, it is probable that it acts in the same way by inhibiting voltage-gated calcium channels. This chain is U-Asilidin(1)-Eru1a, found in Eutolmus rufibarbis (Golden-tabbed robberfly).